A 1200-amino-acid chain; its full sequence is Chromosome partition protein Smc (1200 aa).

33-40 is a binding site for ATP; the sequence is PNGSGKSN. A disordered region spans residues 90-109; the sequence is GENLSEPGANHNGNGNGAKI. Residues 202-528 adopt a coiled-coil conformation; it reads EVQDREERCQ…AASQAQQEVQ (327 aa). Residues 542-656 enclose the SMC hinge domain; it reads PGVCGLVAQL…VFDTLVNARN (115 aa). Residues 692 to 1046 adopt a coiled-coil conformation; that stretch reads TMVSEDTAEV…ERTELLLRIE (355 aa).

Belongs to the SMC family. Homodimer.

The protein localises to the cytoplasm. In terms of biological role, required for chromosome condensation and partitioning. The sequence is that of Chromosome partition protein Smc from Synechocystis sp. (strain ATCC 27184 / PCC 6803 / Kazusa).